We begin with the raw amino-acid sequence, 148 residues long: uncharacterized protein (148 aa).

Residues 3 to 64 (LDALDRKILE…KLNYESIGYD (62 aa)) enclose the HTH asnC-type domain. Positions 22 to 41 (YREIAKDLNVAVGTIYNRIK) form a DNA-binding region, H-T-H motif.

This is an uncharacterized protein from Pyrococcus horikoshii (strain ATCC 700860 / DSM 12428 / JCM 9974 / NBRC 100139 / OT-3).